An 822-amino-acid polypeptide reads, in one-letter code: DNA-directed RNA polymerase subunit beta N-terminal section (822 aa).

The segment at 376–408 (ELTEGNPSSKSQTKNKTSASKKSKTLNVANTKG) is disordered. A compositionally biased stretch (low complexity) spans 383-393 (SSKSQTKNKTS).

It belongs to the RNA polymerase beta chain family. In plastids the minimal PEP RNA polymerase catalytic core is composed of four subunits: alpha, beta, beta', and beta''. When a (nuclear-encoded) sigma factor is associated with the core the holoenzyme is formed, which can initiate transcription.

It localises to the plastid. The protein localises to the chloroplast. The catalysed reaction is RNA(n) + a ribonucleoside 5'-triphosphate = RNA(n+1) + diphosphate. In terms of biological role, DNA-dependent RNA polymerase catalyzes the transcription of DNA into RNA using the four ribonucleoside triphosphates as substrates. The polypeptide is DNA-directed RNA polymerase subunit beta N-terminal section (rpoB1) (Chlamydomonas reinhardtii (Chlamydomonas smithii)).